Consider the following 420-residue polypeptide: UDP-N-acetylglucosamine 1-carboxyvinyltransferase (420 aa).

Lys22–Asn23 contacts phosphoenolpyruvate. Arg92 contributes to the UDP-N-acetyl-alpha-D-glucosamine binding site. Cys116 (proton donor) is an active-site residue. Position 116 is a 2-(S-cysteinyl)pyruvic acid O-phosphothioketal (Cys116). UDP-N-acetyl-alpha-D-glucosamine is bound by residues Arg121–Leu125, Lys161–Val164, Asp306, and Ile328.

This sequence belongs to the EPSP synthase family. MurA subfamily.

The protein localises to the cytoplasm. It carries out the reaction phosphoenolpyruvate + UDP-N-acetyl-alpha-D-glucosamine = UDP-N-acetyl-3-O-(1-carboxyvinyl)-alpha-D-glucosamine + phosphate. The protein operates within cell wall biogenesis; peptidoglycan biosynthesis. Cell wall formation. Adds enolpyruvyl to UDP-N-acetylglucosamine. This chain is UDP-N-acetylglucosamine 1-carboxyvinyltransferase, found in Yersinia pseudotuberculosis serotype O:1b (strain IP 31758).